The sequence spans 87 residues: U3-theraphotoxin-Hhn1q (87 aa).

The signal sequence occupies residues 1 to 24 (MVNMKASMFLTFAGLVLLFVVCYA). Residues 25 to 52 (SESEEKEFPKEMLSSIFAVDNDFKQEER) constitute a propeptide that is removed on maturation. 3 disulfide bridges follow: Cys-54–Cys-67, Cys-61–Cys-72, and Cys-66–Cys-79.

The protein belongs to the neurotoxin 10 (Hwtx-1) family. 51 (Hntx-8) subfamily. Hntx-8 sub-subfamily. As to expression, expressed by the venom gland.

Its subcellular location is the secreted. In terms of biological role, ion channel inhibitor. This is U3-theraphotoxin-Hhn1q from Cyriopagopus hainanus (Chinese bird spider).